Here is a 394-residue protein sequence, read N- to C-terminus: Elongation factor Tu 2 (394 aa).

The region spanning 10 to 204 (KPHVNVGTIG…YLDSYIPEPE (195 aa)) is the tr-type G domain. Residues 19-26 (GHVDHGKT) form a G1 region. 19–26 (GHVDHGKT) contacts GTP. T26 serves as a coordination point for Mg(2+). A G2 region spans residues 60–64 (GITIN). The tract at residues 81-84 (DCPG) is G3. GTP is bound by residues 81 to 85 (DCPGH) and 136 to 139 (NKCD). Residues 136-139 (NKCD) form a G4 region. The G5 stretch occupies residues 174–176 (SAL).

It belongs to the TRAFAC class translation factor GTPase superfamily. Classic translation factor GTPase family. EF-Tu/EF-1A subfamily. In terms of assembly, monomer.

It localises to the cytoplasm. It catalyses the reaction GTP + H2O = GDP + phosphate + H(+). GTP hydrolase that promotes the GTP-dependent binding of aminoacyl-tRNA to the A-site of ribosomes during protein biosynthesis. This is Elongation factor Tu 2 from Yersinia pseudotuberculosis serotype O:1b (strain IP 31758).